The following is a 491-amino-acid chain: Anthranilate synthase component 1 (491 aa).

L-tryptophan-binding positions include serine 49 and 271-273 (PYL). Residue 306-307 (GT) coordinates chorismate. Glutamate 333 contacts Mg(2+). Chorismate is bound by residues tyrosine 421, arginine 441, 455-457 (GAG), and glycine 457. Glutamate 470 is a Mg(2+) binding site.

This sequence belongs to the anthranilate synthase component I family. In terms of assembly, heterotetramer consisting of two non-identical subunits: a beta subunit (TrpG) and a large alpha subunit (TrpE). It depends on Mg(2+) as a cofactor.

The enzyme catalyses chorismate + L-glutamine = anthranilate + pyruvate + L-glutamate + H(+). Its pathway is amino-acid biosynthesis; L-tryptophan biosynthesis; L-tryptophan from chorismate: step 1/5. With respect to regulation, feedback inhibited by tryptophan. Its function is as follows. Part of a heterotetrameric complex that catalyzes the two-step biosynthesis of anthranilate, an intermediate in the biosynthesis of L-tryptophan. In the first step, the glutamine-binding beta subunit (TrpG) of anthranilate synthase (AS) provides the glutamine amidotransferase activity which generates ammonia as a substrate that, along with chorismate, is used in the second step, catalyzed by the large alpha subunit of AS (TrpE) to produce anthranilate. In the absence of TrpG, TrpE can synthesize anthranilate directly from chorismate and high concentrations of ammonia. The sequence is that of Anthranilate synthase component 1 (trpE) from Neisseria gonorrhoeae (strain ATCC 700825 / FA 1090).